A 287-amino-acid polypeptide reads, in one-letter code: 4-hydroxybenzoate octaprenyltransferase (287 aa).

9 helical membrane passes run 21–41 (VGIFLLLWPTLWAVWIAAKGA), 44–64 (FKIAVIFIAGSVVMRAAGCIV), 91–111 (VTEAMLLFAVLSLIAFTLVLL), 112–132 (LNRLTVELAVIGILLALVYPF), 139–159 (LPQLWLGVAFSWSIPMAFAAT), 160–180 (VGHVPAVAWLLFFAAVLWPIV), 211–231 (LMIGLLQGSVLLTFGLLGWYL), 235–255 (YWFYLGLLVALGLMCYQQFLI), and 263–283 (CFAAFRNNNWVGFFIFLGILL).

The protein belongs to the UbiA prenyltransferase family. Requires Mg(2+) as cofactor.

The protein localises to the cell inner membrane. The catalysed reaction is all-trans-octaprenyl diphosphate + 4-hydroxybenzoate = 4-hydroxy-3-(all-trans-octaprenyl)benzoate + diphosphate. It participates in cofactor biosynthesis; ubiquinone biosynthesis. In terms of biological role, catalyzes the prenylation of para-hydroxybenzoate (PHB) with an all-trans polyprenyl group. Mediates the second step in the final reaction sequence of ubiquinone-8 (UQ-8) biosynthesis, which is the condensation of the polyisoprenoid side chain with PHB, generating the first membrane-bound Q intermediate 3-octaprenyl-4-hydroxybenzoate. The chain is 4-hydroxybenzoate octaprenyltransferase from Coxiella burnetii (strain RSA 331 / Henzerling II).